The following is a 928-amino-acid chain: Putative replication origin binding protein (928 aa).

The region spanning 386-516 (NIVPPKGHIT…QVLRDILMTA (131 aa)) is the Helicase ATP-binding domain. 399–406 (ASLGTGKT) is an ATP binding site. Positions 484 to 487 (DECD) match the DEAD box motif.

Belongs to the herpesviridae oribp family.

Functionally, displays bipolar ssDNA and dsDNA unwinding activities that require the same core catalytic residues for unwinding in either direction, the 3'-5' direction being more robust. This chain is Putative replication origin binding protein, found in Escherichia coli (Enterobacteria phage T5).